The following is a 273-amino-acid chain: Phosphate import ATP-binding protein PstB (273 aa).

The disordered stretch occupies residues 1–20; the sequence is MTTVSTAAASGPAVPPPRID. The ABC transporter domain maps to 27 to 268; sequence VAARNLNFYY…PSDRRTQDYI (242 aa). 59-66 contributes to the ATP binding site; sequence GPSGCGKS.

The protein belongs to the ABC transporter superfamily. Phosphate importer (TC 3.A.1.7) family. In terms of assembly, the complex is composed of two ATP-binding proteins (PstB), two transmembrane proteins (PstC and PstA) and a solute-binding protein (PstS).

It is found in the cell inner membrane. It catalyses the reaction phosphate(out) + ATP + H2O = ADP + 2 phosphate(in) + H(+). In terms of biological role, part of the ABC transporter complex PstSACB involved in phosphate import. Responsible for energy coupling to the transport system. The chain is Phosphate import ATP-binding protein PstB from Nitrobacter winogradskyi (strain ATCC 25391 / DSM 10237 / CIP 104748 / NCIMB 11846 / Nb-255).